The chain runs to 92 residues: UPF0297 protein TTE1249 (92 aa).

This sequence belongs to the UPF0297 family.

This is UPF0297 protein TTE1249 from Caldanaerobacter subterraneus subsp. tengcongensis (strain DSM 15242 / JCM 11007 / NBRC 100824 / MB4) (Thermoanaerobacter tengcongensis).